The chain runs to 154 residues: Ribosome maturation factor RimP (154 aa).

This sequence belongs to the RimP family.

It localises to the cytoplasm. Required for maturation of 30S ribosomal subunits. This is Ribosome maturation factor RimP from Deinococcus deserti (strain DSM 17065 / CIP 109153 / LMG 22923 / VCD115).